The primary structure comprises 425 residues: Serine--tRNA ligase (425 aa).

Thr231–Glu233 provides a ligand contact to L-serine. Position 262-264 (Arg262–Glu264) interacts with ATP. Glu285 is a binding site for L-serine. Glu349–Ser352 is an ATP binding site. Ser385 is an L-serine binding site.

This sequence belongs to the class-II aminoacyl-tRNA synthetase family. Type-1 seryl-tRNA synthetase subfamily. Homodimer. The tRNA molecule binds across the dimer.

Its subcellular location is the cytoplasm. It catalyses the reaction tRNA(Ser) + L-serine + ATP = L-seryl-tRNA(Ser) + AMP + diphosphate + H(+). The enzyme catalyses tRNA(Sec) + L-serine + ATP = L-seryl-tRNA(Sec) + AMP + diphosphate + H(+). Its pathway is aminoacyl-tRNA biosynthesis; selenocysteinyl-tRNA(Sec) biosynthesis; L-seryl-tRNA(Sec) from L-serine and tRNA(Sec): step 1/1. Catalyzes the attachment of serine to tRNA(Ser). Is also able to aminoacylate tRNA(Sec) with serine, to form the misacylated tRNA L-seryl-tRNA(Sec), which will be further converted into selenocysteinyl-tRNA(Sec). This is Serine--tRNA ligase from Bacillus velezensis (strain DSM 23117 / BGSC 10A6 / LMG 26770 / FZB42) (Bacillus amyloliquefaciens subsp. plantarum).